We begin with the raw amino-acid sequence, 611 residues long: Pleckstrin homology domain-containing family N member 1 (611 aa).

Residues 1-45 (MGNSHCVPQAPRRLRASFSRKPSLKGNREDSARMSAGLPGPEAAR) form a disordered region. Glycine 2 carries the N-myristoyl glycine lipid modification. The interaction with C1QBP stretch occupies residues 61–100 (TDILDLENQRENLEQPFLSVFKKGRRRVPVRNLGKVVHYA). PH domains lie at 96–192 (VVHY…TALL) and 222–319 (AVCA…THRE). At tyrosine 302 the chain carries Phosphotyrosine. Disordered stretches follow at residues 323–424 (PLPG…PVTP), 438–468 (ESSPDAPDHTSETSHSPLYADPYTPPATSHR), and 483–611 (MQSA…VQWI). Positions 341–350 (GSLSSGGQTS) are enriched in low complexity. The segment covering 360–391 (STRTSHSLPESSVPSTVGCSSQHTPDQANSDR) has biased composition (polar residues). Residue tyrosine 456 is modified to Phosphotyrosine. The span at 498 to 509 (VPVSVPASDPRS) shows a compositional bias: low complexity. Serine 559 is modified (phosphoserine). Basic and acidic residues predominate over residues 570 to 585 (RSPRRSRDPGYDHLWD).

Found in a complex with cytochrome c mRNA and various ribosomal proteins. Interacts with C1QBP. Interacts with ELAVL1. Interacts with BID. Post-translationally, phosphorylation is essential for its mitochondrial localization and regulates its interaction with C1QBP. Ubiquitous. Epressed in several cancer cell lines of differing origin.

It is found in the cell membrane. The protein resides in the mitochondrion. The protein localises to the mitochondrion membrane. Its function is as follows. Controls the stability of the leptin mRNA harboring an AU-rich element (ARE) in its 3' UTR, in cooperation with the RNA stabilizer ELAVL1. Decreases the stability of the leptin mRNA by antagonizing the function of ELAVL1 by inducing its atypical recruitment from the nucleus to the cytosol. Binds to cardiolipin (CL), phosphatidic acid (PA), phosphatidylinositol 4-phosphate (PtdIns(4)P) and phosphatidylserine (PS). Promotes apoptosis by enhancing BAX-BAK hetero-oligomerization via interaction with BID in colon cancer cells. This chain is Pleckstrin homology domain-containing family N member 1 (PLEKHN1), found in Homo sapiens (Human).